The sequence spans 162 residues: Mitochondrial intermembrane space import and assembly protein 40 homolog (162 aa).

The interval 1–61 (MGQAQSDENS…DNENESLEAK (61 aa)) is disordered. Low complexity predominate over residues 9–18 (NSIPTTTTTN). Intrachain disulfides connect Cys-68–Cys-70, Cys-79–Cys-112, and Cys-89–Cys-102. In terms of domain architecture, CHCH spans 76–120 (NGSCGSQFSEAFLCFLKSTAEEKGSDCVNPFVALQSCINANPDAF). Short sequence motifs (cx9C motif) lie at residues 79–89 (CGSQFSEAFLC) and 102–112 (CVNPFVALQSC). Positions 119-162 (AFSKSVTGDEKETEKKEEQPPVQDHRIIPPLWAKDPPRSGNSKL) are disordered. Over residues 125 to 145 (TGDEKETEKKEEQPPVQDHRI) the composition is skewed to basic and acidic residues.

It is found in the mitochondrion intermembrane space. It localises to the peroxisome matrix. Functionally, required for the import and folding of small cysteine-containing proteins in the mitochondrial intermembrane space. Involved in the mitochondrial oxidative folding of the copper-zinc superoxide dismutase CSD1, the copper chaperone for superoxide dismutase CCS, and subunits of the mitochondrial membrane respiratory chain NADH dehydrogenase (Complex I). Involved in the peroxisomal oxidative folding of the copper-zinc superoxide dismutase CSD3, and the fatty acid beta-oxidation multifunctional protein AIM1. The polypeptide is Mitochondrial intermembrane space import and assembly protein 40 homolog (Arabidopsis thaliana (Mouse-ear cress)).